A 177-amino-acid chain; its full sequence is uncharacterized protein (177 aa).

The tract at residues 122–177 is disordered; the sequence is LPFTRNGSGQQSNKLRDPKKGRTHKPKPSEKHKKNKTGKKGAQEKTHRSRSSRKGN. Basic residues-rich tracts occupy residues 142 to 160 and 168 to 177; these read GRTH…KTGK and HRSRSSRKGN.

This is an uncharacterized protein from Saccharomyces cerevisiae (strain ATCC 204508 / S288c) (Baker's yeast).